Consider the following 526-residue polypeptide: NAD(P)H-quinone oxidoreductase chain 4 2 (526 aa).

Helical transmembrane passes span phenylalanine 6–isoleucine 26, tryptophan 36–glycine 56, leucine 91–phenylalanine 111, proline 113–valine 133, leucine 137–tryptophan 157, phenylalanine 169–phenylalanine 189, leucine 212–histidine 232, threonine 243–leucine 263, alanine 275–threonine 295, isoleucine 306–aspartate 326, alanine 332–alanine 352, isoleucine 375–alanine 397, valine 417–methionine 437, and valine 464–valine 484.

Belongs to the complex I subunit 4 family.

The protein localises to the cellular thylakoid membrane. It carries out the reaction a plastoquinone + NADH + (n+1) H(+)(in) = a plastoquinol + NAD(+) + n H(+)(out). The catalysed reaction is a plastoquinone + NADPH + (n+1) H(+)(in) = a plastoquinol + NADP(+) + n H(+)(out). Its function is as follows. NDH-1 shuttles electrons from NAD(P)H, via FMN and iron-sulfur (Fe-S) centers, to quinones in the respiratory chain. The immediate electron acceptor for the enzyme in this species is believed to be plastoquinone. Couples the redox reaction to proton translocation (for every two electrons transferred, four hydrogen ions are translocated across the cytoplasmic membrane), and thus conserves the redox energy in a proton gradient. The protein is NAD(P)H-quinone oxidoreductase chain 4 2 of Picosynechococcus sp. (strain ATCC 27264 / PCC 7002 / PR-6) (Agmenellum quadruplicatum).